Here is a 502-residue protein sequence, read N- to C-terminus: L-amino-acid oxidase BmooLAAO-I (502 aa).

The N-terminal stretch at 1–18 is a signal peptide; that stretch reads MNVFFTFSLLFLAALGSC. Cysteine 28 and cysteine 191 are disulfide-bonded. Residues 61–62, 81–82, arginine 89, and 105–108 each bind FAD; these read MS, EA, and GPMR. Arginine 108 provides a ligand contact to substrate. A glycan (N-linked (GlcNAc...) asparagine) is linked at asparagine 190. Histidine 241 is a binding site for substrate. Valine 279 is an FAD binding site. Cysteine 349 and cysteine 430 form a disulfide bridge. Tyrosine 390 is a substrate binding site. Residues glutamate 475 and 482 to 487 each bind FAD; that span reads GWIDST. 482 to 483 lines the substrate pocket; the sequence is GW.

It belongs to the flavin monoamine oxidase family. FIG1 subfamily. In terms of assembly, homodimer; non-covalently linked. FAD serves as cofactor. N-glycosylated. The enzymatic activity is not affected by deglycosylation. Expressed by the venom gland.

It is found in the secreted. It carries out the reaction an L-alpha-amino acid + O2 + H2O = a 2-oxocarboxylate + H2O2 + NH4(+). It catalyses the reaction L-leucine + O2 + H2O = 4-methyl-2-oxopentanoate + H2O2 + NH4(+). The catalysed reaction is L-phenylalanine + O2 + H2O = 3-phenylpyruvate + H2O2 + NH4(+). The enzyme catalyses L-tryptophan + O2 + H2O = indole-3-pyruvate + H2O2 + NH4(+). It carries out the reaction L-methionine + O2 + H2O = 4-methylsulfanyl-2-oxobutanoate + H2O2 + NH4(+). It catalyses the reaction L-isoleucine + O2 + H2O = (S)-3-methyl-2-oxopentanoate + H2O2 + NH4(+). The catalysed reaction is L-histidine + O2 + H2O = 3-(imidazol-5-yl)pyruvate + H2O2 + NH4(+). The enzyme catalyses L-tyrosine + O2 + H2O = 3-(4-hydroxyphenyl)pyruvate + H2O2 + NH4(+). It carries out the reaction L-alanine + O2 + H2O = pyruvate + H2O2 + NH4(+). It catalyses the reaction L-valine + O2 + H2O = 3-methyl-2-oxobutanoate + H2O2 + NH4(+). With respect to regulation, its enzymatic activities is reduced when it is exposed to Ca(2+), Zn(2+), Al(3+), Cu(2+) or Ni(2+) salts. Functionally, catalyzes an oxidative deamination of predominantly hydrophobic and aromatic L-amino acids, thus producing hydrogen peroxide that may contribute to the toxicity of the venom. Shows very high activity on L-Met, and L-Leu, high activity on L-Ile, L-Phe and L-Tyr and moderate activity on L-His, L-Val and L-Ala. Exhibits diverse biological activities, such as edema, apoptosis of tumor cell lines, antibacterial activities against both Gram-positive and Gram-negative bacteria, as well as induction of platelet aggregation. Effects of snake L-amino oxidases on platelets are controversial, since they either induce aggregation or inhibit agonist-induced aggregation. These different effects are probably due to different experimental conditions. Unlike other snake venom L-amino acid oxidases, does not induce hemorrhage. It may also induce hemolysis. Has parasiticidal activities against and leishmania, as a result of enzyme-catalyzed hydrogen peroxide production. The sequence is that of L-amino-acid oxidase BmooLAAO-I from Bothrops moojeni (Lance-headed viper).